The following is a 151-amino-acid chain: MHALQAKILDPRIGNEFPLPAYATVGSAGLDLRAMLKEDTLLEPGQTLLIPTGLSIYIGDPGLAALILPRSGLGHKHGIVLGNLVGLIDSDYQGELMVSCWNRGQTAFTIAVGERIAQLVLVPVVQARFELVEEFDESQRGTGGFGHSGSH.

Substrate is bound by residues 70–72 (RSG), Asn83, 87–89 (LID), and Met97.

Belongs to the dUTPase family. It depends on Mg(2+) as a cofactor.

The catalysed reaction is dUTP + H2O = dUMP + diphosphate + H(+). It functions in the pathway pyrimidine metabolism; dUMP biosynthesis; dUMP from dCTP (dUTP route): step 2/2. Its function is as follows. This enzyme is involved in nucleotide metabolism: it produces dUMP, the immediate precursor of thymidine nucleotides and it decreases the intracellular concentration of dUTP so that uracil cannot be incorporated into DNA. The protein is Deoxyuridine 5'-triphosphate nucleotidohydrolase of Pseudomonas syringae pv. tomato (strain ATCC BAA-871 / DC3000).